The chain runs to 71 residues: Ceratotoxin-A (71 aa).

Positions Met1 to Ala23 are cleaved as a signal peptide. 2 propeptides span residues Glu24 to Arg35 and Val65 to Gly71.

As to quaternary structure, homomer of four to six subunits.

Its subcellular location is the secreted. Female-specific peptides with potent activity against Gram-positive and Gram-negative bacteria. They have as well hemolytic activity. This Ceratitis capitata (Mediterranean fruit fly) protein is Ceratotoxin-A (CTXA1).